The sequence spans 1452 residues: Pleiotropic drug resistance protein 1 (1452 aa).

The ABC transporter 1 domain occupies 152–425 (LNYLHILPNR…FEYMGFICPE (274 aa)). 185-192 (GPPSSGKT) provides a ligand contact to ATP. The 213-residue stretch at 504 to 716 (LLKACTAREY…AQNAIAVNEF (213 aa)) folds into the ABC transmembrane type-2 1 domain. The next 7 membrane-spanning stretches (helical) occupy residues 521–541 (FVYI…MTLF), 554–574 (GAVF…NGFS), 609–629 (IPIT…VIGF), 640–660 (LLLL…MGAL), 664–684 (IIVA…MGGF), 694–714 (WWIW…IAVN), and 753–773 (IGAG…AVAL). Positions 808 to 830 (LGKSSSEKGNDVRRSASSRSMSS) are disordered. Over residues 812–821 (SSEKGNDVRR) the composition is skewed to basic and acidic residues. The ABC transporter 2 domain maps to 855–1107 (ITFDDIRYAV…HLIKYFEGID (253 aa)). 900–907 (GVSGAGKT) lines the ATP pocket. Residues 1180-1394 (TQCMACFWKQ…TLYGLIASQF (215 aa)) form the ABC transmembrane type-2 2 domain. The next 7 helical transmembrane spans lie at 1199-1219 (YTAV…TIFW), 1239-1259 (YIAV…VIAI), 1287-1307 (LPYL…MIGF), 1314-1334 (FFWY…YGMM), 1344-1364 (IAAI…GFIV), 1375-1395 (WYYY…SQFG), and 1421-1441 (FVGY…FIFA).

This sequence belongs to the ABC transporter superfamily. ABCG family. PDR (TC 3.A.1.205) subfamily. Expressed in root hypodermal passage cells. Expressed in stem tissues, particularly the vasculature and nodes adjacent to leaf axils.

The protein localises to the cell membrane. Its function is as follows. Cellular strigolactone (SL) transporter required for the exudation of SL from the root to the soil. The presence of SL in the vicinity of the roots is required for development of symbiotic interactions with arbuscular mycorrhizal fungi (AMF). Transports SL in the above ground tissues and is required for the control of shoot branching. SL regulates plant shoot architecture by inhibiting the outgrowth of axillary buds. Involved in the regulation of shootward and outward directional strigolactone transport in roots. Due to its polar localization in root cells, mediates directional shootward strigolactone transport, as well as localized outward directional transport for exudation to the soil. The polypeptide is Pleiotropic drug resistance protein 1 (Petunia axillaris (Large white petunia)).